The primary structure comprises 398 residues: S-adenosylmethionine synthase (398 aa).

His16 contributes to the ATP binding site. Residue Asp18 participates in Mg(2+) binding. Glu51 contacts K(+). Positions 64 and 108 each coordinate L-methionine. Positions 108 to 118 (QSADIAQGVDA) are flexible loop. Residues 176-178 (DSK), 242-243 (KF), Asp251, 257-258 (RK), Ala274, and Lys278 contribute to the ATP site. Asp251 contacts L-methionine. Lys282 is a binding site for L-methionine.

This sequence belongs to the AdoMet synthase family. Homotetramer; dimer of dimers. Mg(2+) serves as cofactor. Requires K(+) as cofactor.

It is found in the cytoplasm. The catalysed reaction is L-methionine + ATP + H2O = S-adenosyl-L-methionine + phosphate + diphosphate. It functions in the pathway amino-acid biosynthesis; S-adenosyl-L-methionine biosynthesis; S-adenosyl-L-methionine from L-methionine: step 1/1. Catalyzes the formation of S-adenosylmethionine (AdoMet) from methionine and ATP. The overall synthetic reaction is composed of two sequential steps, AdoMet formation and the subsequent tripolyphosphate hydrolysis which occurs prior to release of AdoMet from the enzyme. The sequence is that of S-adenosylmethionine synthase from Rhodopseudomonas palustris (strain BisB5).